The sequence spans 221 residues: SLVGGVLISLVCLRQTDLKALIAYSSVAHMGIVLSGLLTMTYWGLTGSYALMIAHGLCSSGLFCLANISYERMGSRSLLINKGLLNFMPTLSLWWFLLCSGNMAAPPTLNLLGEISLLNSIVSWSWITMIMLSFLSFFSAAYSLYLFAYSQHGKIYSGVYFFSVGTTREFLLLMLHWLPLNLLILKSNFCMLWIYLNSLKKMLICGVNDMKLFILDRELFS.

The next 5 membrane-spanning stretches (helical) occupy residues 20–40 (ALIAYSSVAHMGIVLSGLLTM), 45–65 (LTGSYALMIAHGLCSSGLFCL), 78–98 (LLINKGLLNFMPTLSLWWFLL), 121–141 (IVSWSWITMIMLSFLSFFSAA), and 170–190 (FLLLMLHWLPLNLLILKSNFC).

It belongs to the complex I subunit 4 family.

It is found in the mitochondrion membrane. It carries out the reaction a ubiquinone + NADH + 5 H(+)(in) = a ubiquinol + NAD(+) + 4 H(+)(out). Functionally, core subunit of the mitochondrial membrane respiratory chain NADH dehydrogenase (Complex I) that is believed to belong to the minimal assembly required for catalysis. Complex I functions in the transfer of electrons from NADH to the respiratory chain. The immediate electron acceptor for the enzyme is believed to be ubiquinone. This is NADH-ubiquinone oxidoreductase chain 4 (ND4) from Anopheles arabiensis (Mosquito).